Here is a 56-residue protein sequence, read N- to C-terminus: MGHANIWYSHPRRYGQGSRSCRACSNRHGLIRKYGLNICRQCFREYAHDIGFKKLD.

4 residues coordinate Zn(2+): Cys21, Cys24, Cys39, and Cys42.

Belongs to the universal ribosomal protein uS14 family. In terms of assembly, component of the 40S small ribosomal subunit. Requires Zn(2+) as cofactor.

It localises to the cytoplasm. The protein resides in the cytosol. It is found in the rough endoplasmic reticulum. The polypeptide is Small ribosomal subunit protein uS14 (RpS29) (Spodoptera frugiperda (Fall armyworm)).